The primary structure comprises 540 residues: Chaperonin GroEL (540 aa).

ATP contacts are provided by residues 29–32 (TLGP), 86–90 (DGTTT), G413, and D495.

It belongs to the chaperonin (HSP60) family. Forms a cylinder of 14 subunits composed of two heptameric rings stacked back-to-back. Interacts with the co-chaperonin GroES.

The protein resides in the cytoplasm. It catalyses the reaction ATP + H2O + a folded polypeptide = ADP + phosphate + an unfolded polypeptide.. Its function is as follows. Together with its co-chaperonin GroES, plays an essential role in assisting protein folding. The GroEL-GroES system forms a nano-cage that allows encapsulation of the non-native substrate proteins and provides a physical environment optimized to promote and accelerate protein folding. The polypeptide is Chaperonin GroEL (Caldanaerobacter subterraneus subsp. tengcongensis (strain DSM 15242 / JCM 11007 / NBRC 100824 / MB4) (Thermoanaerobacter tengcongensis)).